A 289-amino-acid polypeptide reads, in one-letter code: Protoheme IX farnesyltransferase (289 aa).

A run of 9 helical transmembrane segments spans residues 13–33 (LIKP…LYLA), 40–60 (VFLI…SFIF), 85–105 (ISIP…FYML), 111–131 (LLTA…YTIF), 139–159 (NIVI…AAIG), 168–188 (ILFT…AIFL), 212–232 (SIFF…FLEP), 234–254 (MGLL…ILSY), and 269–289 (FLFS…DHMI).

The protein belongs to the UbiA prenyltransferase family. Protoheme IX farnesyltransferase subfamily.

It is found in the cell inner membrane. It catalyses the reaction heme b + (2E,6E)-farnesyl diphosphate + H2O = Fe(II)-heme o + diphosphate. The protein operates within porphyrin-containing compound metabolism; heme O biosynthesis; heme O from protoheme: step 1/1. In terms of biological role, converts heme B (protoheme IX) to heme O by substitution of the vinyl group on carbon 2 of heme B porphyrin ring with a hydroxyethyl farnesyl side group. This Leptospira borgpetersenii serovar Hardjo-bovis (strain JB197) protein is Protoheme IX farnesyltransferase.